The following is a 92-amino-acid chain: Acyl carrier protein AcpXL (92 aa).

One can recognise a Carrier domain in the interval Thr2–Lys88. Ser37 is modified (O-(pantetheine 4'-phosphoryl)serine).

Post-translationally, 4'-phosphopantetheine is transferred from CoA to a specific serine of apo-ACP by AcpS. This modification is essential for activity because fatty acids are bound in thioester linkage to the sulfhydryl of the prosthetic group.

The protein resides in the cytoplasm. It functions in the pathway glycolipid biosynthesis; KDO(2)-lipid A biosynthesis. Its function is as follows. Carrier of the growing fatty acid chain in fatty acid biosynthesis. Is involved in the transfer of long hydroxylated fatty acids to lipid A. Is acylated predominantly with 27-hydroxyoctacosanoic acid. This chain is Acyl carrier protein AcpXL (acpXL), found in Rhizobium etli (strain ATCC 51251 / DSM 11541 / JCM 21823 / NBRC 15573 / CFN 42).